A 267-amino-acid chain; its full sequence is Regulatory protein RecX (267 aa).

The protein belongs to the RecX family.

The protein localises to the cytoplasm. Functionally, modulates RecA activity. The protein is Regulatory protein RecX of Staphylococcus haemolyticus (strain JCSC1435).